The chain runs to 292 residues: AKT-interacting protein (292 aa).

The disordered stretch occupies residues 1 to 64 (MNPFWNMSSA…ISPSPSVQPT (64 aa)). Basic and acidic residues predominate over residues 14–23 (KRSDNDEKIA). The 149-residue stretch at 75–223 (YLEYSLLAEF…VVDSVKLCNS (149 aa)) folds into the UBC core domain. Residues 273–292 (SWVKPGSVLPFSKEENSLQT) are disordered.

Belongs to the ubiquitin-conjugating enzyme family. FTS subfamily.

The protein localises to the cytoplasm. It is found in the cell membrane. Its function is as follows. May function to promote vesicle trafficking and/or fusion. May also regulate apoptosis. In Xenopus tropicalis (Western clawed frog), this protein is AKT-interacting protein (aktip).